We begin with the raw amino-acid sequence, 109 residues long: Oncomodulin (109 aa).

Ser-2 is subject to N-acetylserine. 2 EF-hand domains span residues 39-74 (MSAS…FQSD) and 78-109 (LTES…MVHS). The Ca(2+) site is built by Asp-52, Asp-54, Ser-56, Tyr-58, Glu-63, Asp-91, Asp-93, Asp-95, Lys-97, and Glu-102.

This sequence belongs to the parvalbumin family. In terms of tissue distribution, found in tumor tissues and not detected in normal tissues.

Has some calmodulin-like activity with respect to enzyme activation and growth regulation. Binds two calcium ions. This chain is Oncomodulin (Ocm), found in Rattus norvegicus (Rat).